Here is a 124-residue protein sequence, read N- to C-terminus: Protein YobA (124 aa).

Positions 1–26 (MASTARSLRYALAILTTSLVTPSVWA) are cleaved as a signal peptide. 2 residues coordinate Cu cation: His-27 and His-113.

This sequence belongs to the CopC family.

It is found in the periplasm. The polypeptide is Protein YobA (yobA) (Escherichia coli O6:H1 (strain CFT073 / ATCC 700928 / UPEC)).